The primary structure comprises 435 residues: MPHIRHLAQQCRDAARILATLSTDAKRRLLETMATALNTDAATILAANAADLDTARTQQVGTAMLDRLALDPQRLAAMADALRDIAALPDPVGQVTRDDRRPNGIHIQKIRVPLGVIAMIYEARPNVTADAAALCIKAGNGIILRGGSEAIRSNIAIATALQRALRLASLPETALILVQDMARHTMLELLQLSDLIDLVIPRGGEGLIRFVAEHARIPVIKHYKGVCHQFVDASADIEMAIRLLIDGKTTRPAACNALETLLVHTDIAPRFLPAAAAALRPYGVQLRGDHATCTLLPDVLLATDADYAAEYLDLILAIRIVPNLDAALEHIRRYGSDHTEVIVTADPAHADTFVQQLHSAVVMVNASSRFSDGGALGLGAEIGISTTRLHAYGPMGLDALTVERFVVRGQGQVRHCPLIHLHRDVSVANMPPITS.

Belongs to the gamma-glutamyl phosphate reductase family.

The protein localises to the cytoplasm. The enzyme catalyses L-glutamate 5-semialdehyde + phosphate + NADP(+) = L-glutamyl 5-phosphate + NADPH + H(+). It participates in amino-acid biosynthesis; L-proline biosynthesis; L-glutamate 5-semialdehyde from L-glutamate: step 2/2. Catalyzes the NADPH-dependent reduction of L-glutamate 5-phosphate into L-glutamate 5-semialdehyde and phosphate. The product spontaneously undergoes cyclization to form 1-pyrroline-5-carboxylate. The polypeptide is Gamma-glutamyl phosphate reductase (Xylella fastidiosa (strain M12)).